The following is a 213-amino-acid chain: HTH-type transcriptional regulator SrpR (213 aa).

An HTH tetR-type domain is found at 10 to 70 (EETRQRIIDA…AVLASRQHPL (61 aa)). The segment at residues 33–52 (TLDQIARKAGVTRGAVYWHF) is a DNA-binding region (H-T-H motif).

In terms of biological role, in conjunction with SrpS represses the srpABC operon. In Pseudomonas putida (Arthrobacter siderocapsulatus), this protein is HTH-type transcriptional regulator SrpR (srpR).